The following is a 76-amino-acid chain: Bomanin Tailed 2 (76 aa).

Positions 1–22 (MKALQVAGTLMLLFCLLAAVNA) are cleaved as a signal peptide. Positions 23–24 (TP) are cleaved as a propeptide — removed by a dipeptidylpeptidase. Cys-33 and Cys-36 are joined by a disulfide.

This sequence belongs to the bomanin family.

The protein resides in the secreted. Functionally, secreted immune-induced peptide induced by Toll signaling. Has a role in resistance to bacterial and fungal infections. The strength of antimicrobial activity appears to correlate with the overall level of expression. This is Bomanin Tailed 2 from Drosophila melanogaster (Fruit fly).